Consider the following 682-residue polypeptide: MSEPRKILVTSALPYANGSIHLGHMLEYIQTDMWVRFQKHRGNQCIYVCADDAHGSAIMLRAEKEGITPEQLIDNVKAEHSADFADFLVDFDNFHSTHSDENRELSSMIYTRLRDAGHIATRSVTQYFDPEKKMFLADRFIKGTCPKCAAEDQYGDNCEKCGATYAPTDLKNPKSAISGTTPVLKDSKHFFFDLPAFDAMLKSWTRSGTLQDAVANKIAEWLDSGLQQWDISRDAPYFGFEIPDEPGKYFYVWLDAPIGYMASFKNLCARRPDLDFDAYWGKGATTELYHFIGKDIVNFHALFWPAMLEGAGLRTPTGINVHGYLTVNGQKMSKSRGTFIKARTYLDHLPPEYLRYYYASKLGRGVDDLDLNFEDFVQKVNSDLIGKVVNIASRCAGFIHKGNAGVMGEANAAPELTDAFLAAAPSIADAYEARDFARAMRETMALADRANAYIAEKAPWALAKQEGKQDEVQAVCSLGINLFRQLVIFLKPVLPNLAADAEKFLNVEPLTWEDHKTLLGNHQLNPFSALMTRIDPLKVEAMAAASKEDLTATDATASSAPAGNGELAKDPLSAEIDFDAFAAVDLRVALILKAEHVEGADKLLRLTLDIGDEQRNVFSGIKSAYPNPSELEGRLTMMIANLKPRKMRFGISEGMVMAAGPGGEEIYLLSPDSGAKPGQRIK.

The short motif at 14 to 24 (PYANGSIHLGH) is the 'HIGH' region element. Cys145, Cys148, Cys158, and Cys161 together coordinate Zn(2+). Positions 331–335 (KMSKS) match the 'KMSKS' region motif. Lys334 contacts ATP. The tRNA-binding domain occupies 580 to 682 (AFAAVDLRVA…SGAKPGQRIK (103 aa)).

Belongs to the class-I aminoacyl-tRNA synthetase family. MetG type 1 subfamily. As to quaternary structure, homodimer. It depends on Zn(2+) as a cofactor.

The protein resides in the cytoplasm. The enzyme catalyses tRNA(Met) + L-methionine + ATP = L-methionyl-tRNA(Met) + AMP + diphosphate. Functionally, is required not only for elongation of protein synthesis but also for the initiation of all mRNA translation through initiator tRNA(fMet) aminoacylation. The polypeptide is Methionine--tRNA ligase (Pseudomonas savastanoi pv. phaseolicola (strain 1448A / Race 6) (Pseudomonas syringae pv. phaseolicola (strain 1448A / Race 6))).